The following is a 556-amino-acid chain: CBS domain-containing protein CBSCBSPB3 (556 aa).

2 stretches are compositionally biased toward polar residues: residues 1-20 (MSTQ…NSTV) and 30-44 (PVQS…NTSK). Residues 1 to 63 (MSTQATGPSS…SQAPSNGERT (63 aa)) form a disordered region. N-acetylserine is present on S2. 4 CBS domains span residues 68–127 (RLSK…RPDQ), 134–189 (MTRN…RMEK), 235–294 (ITDN…LSPE), and 302–360 (MTPN…ENSS). Residues 414–502 (GNSFSFKFED…KVLRLHLDFT (89 aa)) form the PB1 domain. A helical membrane pass occupies residues 527 to 549 (WVSWRGGVVVTGAVVLTSIAIVV).

It is found in the membrane. The sequence is that of CBS domain-containing protein CBSCBSPB3 (CBSCBSPB3) from Arabidopsis thaliana (Mouse-ear cress).